A 325-amino-acid polypeptide reads, in one-letter code: Small ribosomal subunit protein RACK1 (325 aa).

WD repeat units follow at residues 13-44 (AHTDVVTAIATPIDNSDMIVTASRDKSIILWH), 61-91 (GHSHFVQDVVLSSDGQFALSGSWDGELRLWD), 103-133 (GHTKDVLSVAFSIDNRQIVSASRDRTIKLWN), 147-179 (AHSDWVSCVRFSPSTPQPTIVSASWDRTVKVWN), 191-221 (GHSGYVNTVAVSPDGSLCASGGKDGVILLWD), 232-261 (DAGSIIHALCFSPNRYWLCAATESSIKIWD), and 291-321 (KKVIYCTSLNWSADGSTLFSGYTDGVVRVWG).

It belongs to the WD repeat G protein beta family. Ribosomal protein RACK1 subfamily.

Plays a role in hormone-mediated cell division. The polypeptide is Small ribosomal subunit protein RACK1 (GB1) (Medicago sativa (Alfalfa)).